A 306-amino-acid chain; its full sequence is MSWIERILNKSTITSARRANIPEGVWTKCDSCGQVLYRAELERNLEVCPKCDHHMRMTARARLHAFLDKGSESELGSELEPKDILKFRDSKKYKDRLAAAQKATDEKDALVVMKGELYGMPVVVASFEFAFIGGSMSSVVGARFVRAVEQALADDCPLVCFSASGGARMQEALMSLMQMAKTSAALARLRERRLPYISVLTDPTMGGVSASLAMLGDLNVAEPKALIGFAGPRVIEQTVREKLPAGFQRSEFLLEKGAIDLIVRRPEMRLRLASLLAKLTNRPQPQDPLPHEPRPDAVPEDHQDEV.

The CoA carboxyltransferase N-terminal domain occupies 25 to 294 (VWTKCDSCGQ…PQDPLPHEPR (270 aa)). Residues C29, C32, C48, and C51 each contribute to the Zn(2+) site. The C4-type zinc-finger motif lies at 29–51 (CDSCGQVLYRAELERNLEVCPKC). Positions 281–306 (NRPQPQDPLPHEPRPDAVPEDHQDEV) are disordered. Basic and acidic residues predominate over residues 289-306 (LPHEPRPDAVPEDHQDEV).

It belongs to the AccD/PCCB family. As to quaternary structure, acetyl-CoA carboxylase is a heterohexamer composed of biotin carboxyl carrier protein (AccB), biotin carboxylase (AccC) and two subunits each of ACCase subunit alpha (AccA) and ACCase subunit beta (AccD). It depends on Zn(2+) as a cofactor.

The protein resides in the cytoplasm. The catalysed reaction is N(6)-carboxybiotinyl-L-lysyl-[protein] + acetyl-CoA = N(6)-biotinyl-L-lysyl-[protein] + malonyl-CoA. Its pathway is lipid metabolism; malonyl-CoA biosynthesis; malonyl-CoA from acetyl-CoA: step 1/1. Component of the acetyl coenzyme A carboxylase (ACC) complex. Biotin carboxylase (BC) catalyzes the carboxylation of biotin on its carrier protein (BCCP) and then the CO(2) group is transferred by the transcarboxylase to acetyl-CoA to form malonyl-CoA. The chain is Acetyl-coenzyme A carboxylase carboxyl transferase subunit beta from Sodalis glossinidius (strain morsitans).